The sequence spans 284 residues: RNase adapter protein RapZ (284 aa).

Position 8-15 (8-15 (GRSGSGKS)) interacts with ATP. 56–59 (DVRN) is a GTP binding site. Residues 266–284 (RSRGKNVQSRHRTLEKRRS) are RNA-binding.

This sequence belongs to the RapZ-like family. RapZ subfamily. Homotrimer.

Functionally, modulates the synthesis of GlmS, by affecting the processing and stability of the regulatory small RNA GlmZ. When glucosamine-6-phosphate (GlcN6P) concentrations are high in the cell, RapZ binds GlmZ and targets it to cleavage by RNase E. Consequently, GlmZ is inactivated and unable to activate GlmS synthesis. Under low GlcN6P concentrations, RapZ is sequestered and inactivated by an other regulatory small RNA, GlmY, preventing GlmZ degradation and leading to synthesis of GlmS. The chain is RNase adapter protein RapZ from Erwinia tasmaniensis (strain DSM 17950 / CFBP 7177 / CIP 109463 / NCPPB 4357 / Et1/99).